The following is a 271-amino-acid chain: Thiazole synthase (271 aa).

The active-site Schiff-base intermediate with DXP is Lys95. 1-deoxy-D-xylulose 5-phosphate contacts are provided by residues Gly156, 182 to 183 (AG), and 204 to 205 (NT).

The protein belongs to the ThiG family. Homotetramer. Forms heterodimers with either ThiH or ThiS.

Its subcellular location is the cytoplasm. It catalyses the reaction [ThiS sulfur-carrier protein]-C-terminal-Gly-aminoethanethioate + 2-iminoacetate + 1-deoxy-D-xylulose 5-phosphate = [ThiS sulfur-carrier protein]-C-terminal Gly-Gly + 2-[(2R,5Z)-2-carboxy-4-methylthiazol-5(2H)-ylidene]ethyl phosphate + 2 H2O + H(+). It participates in cofactor biosynthesis; thiamine diphosphate biosynthesis. In terms of biological role, catalyzes the rearrangement of 1-deoxy-D-xylulose 5-phosphate (DXP) to produce the thiazole phosphate moiety of thiamine. Sulfur is provided by the thiocarboxylate moiety of the carrier protein ThiS. In vitro, sulfur can be provided by H(2)S. The chain is Thiazole synthase from Yersinia pestis.